A 102-amino-acid chain; its full sequence is Acid shock protein (102 aa).

The N-terminal stretch at 1-21 (MKKVLALVVAAAMGLSSAAFA) is a signal peptide. The span at 22–41 (AETATTPAPTATTTKAAPAK) shows a compositional bias: low complexity. A propeptide spanning residues 22–58 (AETATTPAPTATTTKAAPAKTTHHKKQHKAAPAQKAQ) is cleaved from the precursor. The interval 22-102 (AETATTPAPT…PAKPAAQPAA (81 aa)) is disordered. Basic residues predominate over residues 80–90 (AAKKHAKKHSH). The span at 91–102 (QQPAKPAAQPAA) shows a compositional bias: low complexity.

The protein belongs to the Asr family. In terms of processing, proteolytic processing gives rise to the active protein.

It localises to the periplasm. In terms of biological role, required for growth and/or survival at acidic conditions. The chain is Acid shock protein (asr) from Escherichia coli O157:H7.